A 96-amino-acid chain; its full sequence is Co-chaperonin GroES (96 aa).

The protein belongs to the GroES chaperonin family. In terms of assembly, heptamer of 7 subunits arranged in a ring. Interacts with the chaperonin GroEL.

The protein localises to the cytoplasm. Its function is as follows. Together with the chaperonin GroEL, plays an essential role in assisting protein folding. The GroEL-GroES system forms a nano-cage that allows encapsulation of the non-native substrate proteins and provides a physical environment optimized to promote and accelerate protein folding. GroES binds to the apical surface of the GroEL ring, thereby capping the opening of the GroEL channel. The polypeptide is Co-chaperonin GroES (Thioalkalivibrio sulfidiphilus (strain HL-EbGR7)).